Reading from the N-terminus, the 295-residue chain is Mycothiol acetyltransferase (295 aa).

N-acetyltransferase domains lie at 5-141 (VEIR…TPLP) and 149-295 (VRLR…MYRR). 1D-myo-inositol 2-(L-cysteinylamino)-2-deoxy-alpha-D-glucopyranoside is bound at residue E35. Residue 76–78 (LVV) coordinates acetyl-CoA. Residues E176, K215, and E229 each contribute to the 1D-myo-inositol 2-(L-cysteinylamino)-2-deoxy-alpha-D-glucopyranoside site. Acetyl-CoA is bound by residues 233–235 (VGV) and 240–246 (RGTGLGR). Y267 serves as a coordination point for 1D-myo-inositol 2-(L-cysteinylamino)-2-deoxy-alpha-D-glucopyranoside. Position 272–277 (272–277 (NTAAVR)) interacts with acetyl-CoA.

This sequence belongs to the acetyltransferase family. MshD subfamily. Monomer.

It catalyses the reaction 1D-myo-inositol 2-(L-cysteinylamino)-2-deoxy-alpha-D-glucopyranoside + acetyl-CoA = mycothiol + CoA + H(+). Functionally, catalyzes the transfer of acetyl from acetyl-CoA to desacetylmycothiol (Cys-GlcN-Ins) to form mycothiol. This chain is Mycothiol acetyltransferase, found in Thermobispora bispora (strain ATCC 19993 / DSM 43833 / CBS 139.67 / JCM 10125 / KCTC 9307 / NBRC 14880 / R51).